We begin with the raw amino-acid sequence, 439 residues long: C4-dicarboxylate transport protein 1 (439 aa).

The next 6 helical transmembrane spans lie at 18 to 38 (VLYI…WLWP), 56 to 76 (LIKM…IAHV), 91 to 111 (IYFE…ANVI), 157 to 177 (GEIL…MSLG), 193 to 213 (AIFG…FGAM), and 231 to 251 (LIAT…GIIA).

This sequence belongs to the dicarboxylate/amino acid:cation symporter (DAACS) (TC 2.A.23) family.

The protein localises to the cell inner membrane. Its function is as follows. Responsible for the transport of dicarboxylates such as succinate, fumarate, and malate from the periplasm across the membrane. This Bradyrhizobium sp. (strain ORS 278) protein is C4-dicarboxylate transport protein 1.